The primary structure comprises 31 residues: Nemertide alpha-4 (31 aa).

3 disulfide bridges follow: Cys-2–Cys-16, Cys-9–Cys-20, and Cys-15–Cys-26. Pro-28 and Pro-29 each carry 4-hydroxyproline.

The protein belongs to the nemertide family. In terms of tissue distribution, confined to the epidermis and to the mucus layer.

The protein localises to the secreted. Its function is as follows. Potent toxin, demonstrating strong inhibitory effects on insect sodium channels (Nav) and reduced activity on mammalian sodium channels. Potently inhibits inactivation of insect sodium channels of B.germanica (BgNav1) (EC(50)=11.1 nM). Also delays the inactivation of most mammalian Nav (human Nav1.1/SCN1A; EC(50)=92 nM, rat Nav1.2/SCN2A; EC(50)=134.2 nM, rat Nav1.3/SCN3A; EC(50)=12.9 nM, rat Nav1.4/SCN4A; EC(50)=14.6 nM, human Nav1.5/SCN5A; EC(50)=27.8 nM, mouse Nav1.6/SCN8A; EC(50)=123.6 nM, human Nav1.9/SCN9A; EC(50)=80.5 nM). Inactivation is completely prevented by a concentration of 1 uM, resulting in sustained, non-inactivating currents. In addition, the toxin significantly enhances the recovery from inactivation, and the open state is not required for the toxin to interact with the channel. In vivo, injection into brine shrimp (Artemia salina) stops movement or causes death after 24 hours (EC(50)=0.4 uM). The sequence is that of Nemertide alpha-4 from Lineus sanguineus (Ribbon worm).